We begin with the raw amino-acid sequence, 329 residues long: Peroxidase 5 (329 aa).

The N-terminal stretch at 1–26 (MSSKRVTWLSLTWVLVFLCLSVELEA) is a signal peptide. Gln-27 carries the pyrrolidone carboxylic acid modification. Disulfide bonds link Cys-37–Cys-117, Cys-70–Cys-75, Cys-123–Cys-324, and Cys-202–Cys-234. The Proton acceptor role is filled by His-68. Asp-69, Val-72, Gly-74, Asp-76, and Ser-78 together coordinate Ca(2+). Pro-165 is a substrate binding site. Residue His-195 coordinates heme b. Thr-196 provides a ligand contact to Ca(2+). Asn-213 is a glycosylation site (N-linked (GlcNAc...) asparagine). Residues Ser-251 and Asp-256 each coordinate Ca(2+).

It belongs to the peroxidase family. Classical plant (class III) peroxidase subfamily. The cofactor is heme b. Requires Ca(2+) as cofactor.

The protein localises to the secreted. It carries out the reaction 2 a phenolic donor + H2O2 = 2 a phenolic radical donor + 2 H2O. In terms of biological role, removal of H(2)O(2), oxidation of toxic reductants, biosynthesis and degradation of lignin, suberization, auxin catabolism, response to environmental stresses such as wounding, pathogen attack and oxidative stress. These functions might be dependent on each isozyme/isoform in each plant tissue. The protein is Peroxidase 5 of Vitis vinifera (Grape).